The following is a 346-amino-acid chain: Flap endonuclease 1 (346 aa).

The interval 1–102 is N-domain; the sequence is MGVTELGKLI…AEIEERRKTR (102 aa). Residues Asp-31, Asp-84, Glu-156, Glu-158, Asp-177, Asp-179, and Asp-239 each coordinate Mg(2+). Positions 120–261 are I-domain; the sequence is DVAKYAKRAV…KALKLIWEFG (142 aa).

Belongs to the XPG/RAD2 endonuclease family. FEN1 subfamily. As to quaternary structure, interacts with PCNA. PCNA stimulates the nuclease activity without altering cleavage specificity. The cofactor is Mg(2+).

Functionally, structure-specific nuclease with 5'-flap endonuclease and 5'-3' exonuclease activities involved in DNA replication and repair. During DNA replication, cleaves the 5'-overhanging flap structure that is generated by displacement synthesis when DNA polymerase encounters the 5'-end of a downstream Okazaki fragment. Binds the unpaired 3'-DNA end and kinks the DNA to facilitate 5' cleavage specificity. Cleaves one nucleotide into the double-stranded DNA from the junction in flap DNA, leaving a nick for ligation. Also involved in the base excision repair (BER) pathway. Acts as a genome stabilization factor that prevents flaps from equilibrating into structures that lead to duplications and deletions. Also possesses 5'-3' exonuclease activity on nicked or gapped double-stranded DNA. The sequence is that of Flap endonuclease 1 from Pyrobaculum aerophilum (strain ATCC 51768 / DSM 7523 / JCM 9630 / CIP 104966 / NBRC 100827 / IM2).